The sequence spans 171 residues: UPF0260 protein Nham_1404 (171 aa).

It belongs to the UPF0260 family.

In Nitrobacter hamburgensis (strain DSM 10229 / NCIMB 13809 / X14), this protein is UPF0260 protein Nham_1404.